A 212-amino-acid polypeptide reads, in one-letter code: Probable GTP-binding protein EngB (212 aa).

The 173-residue stretch at 38–210 (SLPEIAFVGK…KASLAKCIKP (173 aa)) folds into the EngB-type G domain. GTP is bound by residues 46–53 (GKSNVGKS), 73–77 (GRTRQ), 91–94 (DLPG), 158–161 (TKSD), and 189–191 (VSN). Mg(2+)-binding residues include serine 53 and threonine 75.

This sequence belongs to the TRAFAC class TrmE-Era-EngA-EngB-Septin-like GTPase superfamily. EngB GTPase family. It depends on Mg(2+) as a cofactor.

Functionally, necessary for normal cell division and for the maintenance of normal septation. This is Probable GTP-binding protein EngB from Rickettsia peacockii (strain Rustic).